A 651-amino-acid polypeptide reads, in one-letter code: Peptide-N(4)-(N-acetyl-beta-glucosaminyl)asparagine amidase (651 aa).

Residues 29–90 (EASRLLLTYA…EGETHMVFPK (62 aa)) form the PUB domain. Residues Cys-246, Cys-249, Cys-279, and Cys-282 each contribute to the Zn(2+) site. Catalysis depends on Cys-305, which acts as the Nucleophile. Catalysis depends on residues His-332 and Asp-349. The region spanning 450-651 (EFGGRTSGSM…LEMIIKLADL (202 aa)) is the PAW domain.

This sequence belongs to the transglutaminase-like superfamily. PNGase family. It depends on Zn(2+) as a cofactor.

The protein resides in the cytoplasm. It carries out the reaction Hydrolysis of an N(4)-(acetyl-beta-D-glucosaminyl)asparagine residue in which the glucosamine residue may be further glycosylated, to yield a (substituted) N-acetyl-beta-D-glucosaminylamine and a peptide containing an aspartate residue.. Specifically deglycosylates the denatured form of N-linked glycoproteins in the cytoplasm and assists their proteasome-mediated degradation. Cleaves the beta-aspartyl-glucosamine (GlcNAc) of the glycan and the amide side chain of Asn, converting Asn to Asp. Prefers proteins containing high-mannose over those bearing complex type oligosaccharides. Can recognize misfolded proteins in the endoplasmic reticulum that are exported to the cytosol to be destroyed and deglycosylate them, while it has no activity toward native proteins. Deglycosylation is a prerequisite for subsequent proteasome-mediated degradation of some, but not all, misfolded glycoproteins. The polypeptide is Peptide-N(4)-(N-acetyl-beta-glucosaminyl)asparagine amidase (NGLY1) (Gallus gallus (Chicken)).